The sequence spans 97 residues: Citrate lyase acyl carrier protein (97 aa).

Ser14 carries the post-translational modification O-(phosphoribosyl dephospho-coenzyme A)serine.

It belongs to the CitD family. Oligomer with a subunit composition of (alpha,beta,gamma)6.

The protein localises to the cytoplasm. In terms of biological role, covalent carrier of the coenzyme of citrate lyase. In Yersinia enterocolitica serotype O:8 / biotype 1B (strain NCTC 13174 / 8081), this protein is Citrate lyase acyl carrier protein.